A 275-amino-acid polypeptide reads, in one-letter code: Adaptin ear-binding coat-associated protein 1 (275 aa).

Positions 168–275 (AKKGGASKPR…APQPSNWVQF (108 aa)) are disordered. Positions 187–201 (LPPPPGGKVTIPPPS) are enriched in pro residues. At Thr211 the chain carries Phosphothreonine. The span at 233-248 (SPAPVSTSAPAPVSTS) shows a compositional bias: low complexity. 2 consecutive short sequence motifs (WXXF motif) follow at residues 252–255 (WGDF) and 272–275 (WVQF). Polar residues predominate over residues 256–275 (STASSSVPNQAPQPSNWVQF).

It belongs to the NECAP family. In terms of assembly, interacts with AP1G1 and AP2A1 components of the adapter protein complexes AP-1 and AP-2. Interacts with the GAE domain proteins GGA1, GGA2 and GGA3. As to expression, expressed primarily in brain (at protein level).

The protein localises to the cytoplasmic vesicle. The protein resides in the clathrin-coated vesicle membrane. It localises to the cell membrane. In terms of biological role, involved in endocytosis. The sequence is that of Adaptin ear-binding coat-associated protein 1 (Necap1) from Mus musculus (Mouse).